The following is a 120-amino-acid chain: Large ribosomal subunit protein bL19c (120 aa).

The protein belongs to the bacterial ribosomal protein bL19 family.

It localises to the plastid. The protein resides in the chloroplast. This is Large ribosomal subunit protein bL19c from Thalassiosira pseudonana (Marine diatom).